The sequence spans 155 residues: MTDQIYYETMYILRPDIAEEEVKNHIDKYNKLLEEFGATILDSQMRGKRRLAYQIAKHREGIYVQLSHQGDGQHIFKIEKAMRLSEDVIRYLTVKQEGPLPTPRSSNKSSNQAEKKENENIDSANKSEPKADETDNKKKITLESSTPELEEQVKS.

Positions 94-155 (VKQEGPLPTP…TPELEEQVKS (62 aa)) are disordered. Positions 103 to 112 (PRSSNKSSNQ) are enriched in polar residues. Basic and acidic residues predominate over residues 113 to 141 (AEKKENENIDSANKSEPKADETDNKKKIT).

Belongs to the bacterial ribosomal protein bS6 family.

Functionally, binds together with bS18 to 16S ribosomal RNA. This Prochlorococcus marinus (strain MIT 9515) protein is Small ribosomal subunit protein bS6.